We begin with the raw amino-acid sequence, 232 residues long: MIRDERWFGVYSFEDTPFLMETLTDLRNINTDNISFRKGLVRLGRYMGYELTKTMEFEKINITTPLEKTEGIISKDRKNVVIITILRAAFPLMEGLIKTLESAKVGIISASRGHAPKFNIEMNYVKVPRVTENDTIIIADPMIATGSTLINVLTELKKSEKSKRIVILGVLAAPEGIDSIKKAFPDVEIFVTKIDRELNKDGYIVPGLGDAGDRAFGEPFKVSLLPQMHNLE.

Position 38–42 (38–42) interacts with GTP; it reads KGLVR. Residues arginine 87, arginine 112, and 140-148 contribute to the 5-phospho-alpha-D-ribose 1-diphosphate site; that span reads DPMIATGST. Residues isoleucine 204 and 209-211 contribute to the uracil site; that span reads GDA. Aspartate 210 provides a ligand contact to 5-phospho-alpha-D-ribose 1-diphosphate.

This sequence belongs to the UPRTase family. Mg(2+) serves as cofactor.

The enzyme catalyses UMP + diphosphate = 5-phospho-alpha-D-ribose 1-diphosphate + uracil. The protein operates within pyrimidine metabolism; UMP biosynthesis via salvage pathway; UMP from uracil: step 1/1. Allosterically activated by GTP. Functionally, catalyzes the conversion of uracil and 5-phospho-alpha-D-ribose 1-diphosphate (PRPP) to UMP and diphosphate. This is Uracil phosphoribosyltransferase from Methanococcus vannielii (strain ATCC 35089 / DSM 1224 / JCM 13029 / OCM 148 / SB).